Consider the following 341-residue polypeptide: MLDNIKIKLQYWLPKIWLTRLAGWGANKRAGKLTKLVIDLFVRQYHVNMQEALQPDTASYRTFNEFFVRPLRPGIRPVDPHAHRLVQPADGVLSQFGPITDGKLIQAKNHDYTLEALLAGNYMMADLFRDGLFATIYLSPRDYHRLHMPCDGVLREMIYVPGDLFSVNLLTADNVPNLFARNERVICLFDTEFGPLAQILVGATIVGSIETVWAGVVTPPREGIIKRWTYPQAGEEGAVVLAKGEEMGRFKLGSTVINLFTAGDLQFAAHLNIMSVTRMGEPFAEVRQDEQTPVVFPEGTELEENDAAQPPVAATSEPVQADGQNPAAEVSGQTGHKPDAP.

Catalysis depends on charge relay system; for autoendoproteolytic cleavage activity residues Asp90, His147, and Ser254. Catalysis depends on Ser254, which acts as the Schiff-base intermediate with substrate; via pyruvic acid; for decarboxylase activity. Ser254 carries the pyruvic acid (Ser); by autocatalysis modification. The disordered stretch occupies residues 287 to 341; sequence RQDEQTPVVFPEGTELEENDAAQPPVAATSEPVQADGQNPAAEVSGQTGHKPDAP.

The protein belongs to the phosphatidylserine decarboxylase family. PSD-B subfamily. Prokaryotic type I sub-subfamily. In terms of assembly, heterodimer of a large membrane-associated beta subunit and a small pyruvoyl-containing alpha subunit. Pyruvate is required as a cofactor. Is synthesized initially as an inactive proenzyme. Formation of the active enzyme involves a self-maturation process in which the active site pyruvoyl group is generated from an internal serine residue via an autocatalytic post-translational modification. Two non-identical subunits are generated from the proenzyme in this reaction, and the pyruvate is formed at the N-terminus of the alpha chain, which is derived from the carboxyl end of the proenzyme. The autoendoproteolytic cleavage occurs by a canonical serine protease mechanism, in which the side chain hydroxyl group of the serine supplies its oxygen atom to form the C-terminus of the beta chain, while the remainder of the serine residue undergoes an oxidative deamination to produce ammonia and the pyruvoyl prosthetic group on the alpha chain. During this reaction, the Ser that is part of the protease active site of the proenzyme becomes the pyruvoyl prosthetic group, which constitutes an essential element of the active site of the mature decarboxylase.

It localises to the cell membrane. It catalyses the reaction a 1,2-diacyl-sn-glycero-3-phospho-L-serine + H(+) = a 1,2-diacyl-sn-glycero-3-phosphoethanolamine + CO2. It functions in the pathway phospholipid metabolism; phosphatidylethanolamine biosynthesis; phosphatidylethanolamine from CDP-diacylglycerol: step 2/2. Functionally, catalyzes the formation of phosphatidylethanolamine (PtdEtn) from phosphatidylserine (PtdSer). This is Phosphatidylserine decarboxylase proenzyme from Pectobacterium atrosepticum (strain SCRI 1043 / ATCC BAA-672) (Erwinia carotovora subsp. atroseptica).